A 311-amino-acid polypeptide reads, in one-letter code: Putative tenascin-XA (311 aa).

Disordered regions lie at residues 1–47 and 124–150; these read MEDK…EPRL and LSAE…SQLS. Fibronectin type-III domains lie at 41 to 135, 145 to 249, and 250 to 311; these read PPEE…LAPA, RLSQ…SPRD, and LQFS…SCVH.

As to expression, expressed in the adrenal gland.

The protein is Putative tenascin-XA (TNXA) of Homo sapiens (Human).